Reading from the N-terminus, the 545-residue chain is MSSGNRQAPMPPPKPRNLGRGQFYQQGGYLTPQDSDTDSGISADCDQGSPRAAAGFGGTGFNGTVNGQQVNSQRRIPDLPPGAYQNYRSHSSADYLTPNSARKIASYSTTPRRLPLQPQQQAPATATKAKYRVRFADEVDSGASTSSGTSSTHISPRNDPQEMLMNSAVGAPQITSTFQQPASYMQNSSDAQYKMNKIEYPPVSRTPPVACSSRTGTLQRTPNRRLPISSTPQPQPTYADQMQSLPEPPPYTIAMQRLRSVEQQPQESFRDAFIRKSVNDTLQRRYRQRSSSLPRGNKSYYEGIDIYDAQPPIRPLPQQQTSLMTVANQLPGSLDNLHINNLNMRRRKLPTAPLMGSSCQLHLDNSDELTAYRALQFQMMQDELQRQQPPPQSFERPTLLRRTNMPQQQSFNIPHITTTGPPPPAMGLSVPVQYDQGEYGTQSVRAQLVALDQRGFRRVLVEKMMPGPFGFYIATGVVAGQRAGIFISRVSLPSLSPMLTVGDEIIYVDEEYVKGRSLEYVQSVIAGKTSVTITLLPAVGQPAIC.

Disordered stretches follow at residues 1-162 and 200-250; these read MSSG…DPQE and YPPV…EPPP. The segment covering 86 to 100 has biased composition (polar residues); it reads NYRSHSSADYLTPNS. Composition is skewed to low complexity over residues 109 to 128 and 141 to 152; these read TTPR…TATK and SGASTSSGTSST. Composition is skewed to polar residues over residues 212-221 and 228-244; these read SSRTGTLQRT and ISST…QMQS. The PDZ domain maps to 458 to 540; sequence RVLVEKMMPG…VTITLLPAVG (83 aa).

This is an uncharacterized protein from Caenorhabditis elegans.